Here is a 508-residue protein sequence, read N- to C-terminus: Probable zinc metalloprotease MCYG_04217 (508 aa).

Residue Asn111 is glycosylated (N-linked (GlcNAc...) asparagine). Zn(2+) contacts are provided by His182, Asp202, and Glu238. Asn253 is a glycosylation site (N-linked (GlcNAc...) asparagine). Asp265 serves as a coordination point for Zn(2+). In terms of domain architecture, Fibronectin type-III spans 422–508 (MPRNVRVDTS…ERGVAVLPFP (87 aa)). Asn435 carries an N-linked (GlcNAc...) asparagine glycan.

The protein belongs to the peptidase M28 family. M28B subfamily. Requires Zn(2+) as cofactor.

The protein resides in the secreted. In Arthroderma otae (strain ATCC MYA-4605 / CBS 113480) (Microsporum canis), this protein is Probable zinc metalloprotease MCYG_04217.